The following is a 759-amino-acid chain: Tripartite motif-containing protein 46 (759 aa).

The tract at residues 1–166 (MAEGEDMQTF…VERYRQSVSV (166 aa)) is required for proximal axon localization, axon formation and migration. The RING-type 1; degenerate zinc finger occupies 33–59 (CPVCQEMYKQPLVLPCTHNVCQACARE). Residues 67-98 (IGHGGDPSSEPTSPASTPSTRSPRLSRRTLPK) are disordered. Over residues 73-89 (PSSEPTSPASTPSTRSP) the composition is skewed to low complexity. An RING-type 2; degenerate zinc finger spans residues 172-231 (CQLCKPPPLEATKGCTECRATFCNECFKLFHPWGTQKAQHEPTLPTLSFRPKGLMCPDHK). The segment at 222 to 263 (PKGLMCPDHKEEVTHYCKTCQRLVCQLCRVRRTHSGHKITPV) adopts a B box-type zinc-finger fold. Positions 227, 230, 249, and 255 each coordinate Zn(2+). Residues 322 to 400 (AVLEEKRASL…RATEALQTFR (79 aa)) adopt a coiled-coil conformation. Ser-330 carries the phosphoserine modification. One can recognise a COS domain in the interval 370–427 (LKETDQPCFVQAAKQLHNRIARATEALQTFRPAASSSFRHCQLDVGREMKLLTELSFL). Residues 411–429 (QLDVGREMKLLTELSFLRV) form a required for microtubule association, proximal axon localization and axon formation region. The Fibronectin type-III domain maps to 429–528 (VPEAPVIDTQ…EDVHLHTPPA (100 aa)). The B30.2/SPRY domain occupies 526–747 (PPAPVLHFFL…LQEPVGTKPE (222 aa)). Ser-627 is modified (phosphoserine).

The protein belongs to the TRIM/RBCC family. Interacts with TUBB3 and TUBA4A. Expressed in the central nervous system, including pyramidal neurons and interneurons in the cortex and hippocampus and all neuronal cell types in the cerebral and cerebellar cortex, and in the peripheral nervous system, including the dorsal root ganglion neurons.

The protein resides in the cell projection. Its subcellular location is the axon. It localises to the cytoplasm. It is found in the cytoskeleton. Functionally, microtubule-associated protein that is involved in the formation of parallel microtubule bundles linked by cross-bridges in the proximal axon. Required for the uniform orientation and maintenance of the parallel microtubule fascicles, which are important for efficient cargo delivery and trafficking in axons. Thereby also required for proper axon formation, the establishment of neuronal polarity and proper neuronal migration. The sequence is that of Tripartite motif-containing protein 46 (Trim46) from Mus musculus (Mouse).